We begin with the raw amino-acid sequence, 280 residues long: Probable protein VP2 (280 aa).

2 disordered regions span residues 46-167 (LGAG…FFTS) and 200-280 (AQLS…TYSN). Pro residues predominate over residues 65-81 (PEGPGGPPQHAPPNPPP). Residues 90–100 (RGGGAGGAGDG) are compositionally biased toward gly residues. Acidic residues predominate over residues 106-117 (DAAEEYGPEDLD). A compositionally biased stretch (basic residues) spans 227–251 (AKTRRRVKKKPLSSKNKHTKKKKRS). Residues 252–266 (YSSSSPSSKDNTSES) show a composition bias toward low complexity.

Post-translationally, phosphorylated at C-terminal serines.

This Homo sapiens (Human) protein is Probable protein VP2.